The sequence spans 218 residues: MSLAEFDELRWDHSCDRLDVPSNYLKRKARKTPGGLEELRKSMTSATIYVGNLSFYTSEEQLYELFSKCGSIEKIIMGLDRFKFTPCGFCFIIYQTPQEALAALKYLSKTKLDDREITIDLDPGFEEGRQFGRGKNGGQVSDELRFEFDASRGGFYVPLENRIGAVNHFGARRIRDPHKNHHHHHHGHHHHHGQPHAAAAKVNPMEVEEELDSYIPGQ.

Residues Y24, Y49, 118 to 122, 129 to 133, and 139 to 140 each bind mRNA; these read TIDLD, RQFGR, and QV. Positions 46-124 constitute an RRM domain; the sequence is ATIYVGNLSF…REITIDLDPG (79 aa). Residues 176–194 show a composition bias toward basic residues; the sequence is DPHKNHHHHHHGHHHHHGQ. The disordered stretch occupies residues 176-200; that stretch reads DPHKNHHHHHHGHHHHHGQPHAAAA.

Belongs to the RRM NCBP2 family. In terms of assembly, component of the nuclear cap-binding complex (CBC).

It localises to the nucleus. In terms of biological role, component of the cap-binding complex (CBC) involved in the nuclear export of capped U snRNAs. The CBC complex is required for efficient pre-mRNA splicing through efficient commitment complex and spliceosome formation; and involved in rRNA processing at sites A0, A1 and A2. This is Nuclear cap-binding protein subunit 2 (CBC2) from Eremothecium gossypii (strain ATCC 10895 / CBS 109.51 / FGSC 9923 / NRRL Y-1056) (Yeast).